Consider the following 269-residue polypeptide: Energy-coupling factor transporter ATP-binding protein EcfA1 (269 aa).

An ABC transporter domain is found at 8-242 (IVFKNVSFQY…AEELTTIGLD (235 aa)). 42–49 (GHNGSGKS) is a binding site for ATP.

It belongs to the ABC transporter superfamily. Energy-coupling factor EcfA family. As to quaternary structure, forms a stable energy-coupling factor (ECF) transporter complex composed of 2 membrane-embedded substrate-binding proteins (S component), 2 ATP-binding proteins (A component) and 2 transmembrane proteins (T component).

It localises to the cell membrane. ATP-binding (A) component of a common energy-coupling factor (ECF) ABC-transporter complex. Unlike classic ABC transporters this ECF transporter provides the energy necessary to transport a number of different substrates. This chain is Energy-coupling factor transporter ATP-binding protein EcfA1, found in Staphylococcus aureus (strain MSSA476).